The sequence spans 418 residues: Serine hydroxymethyltransferase (418 aa).

(6S)-5,6,7,8-tetrahydrofolate contacts are provided by residues leucine 120 and 124 to 126 (GHL). N6-(pyridoxal phosphate)lysine is present on lysine 229. 353-355 (SPF) provides a ligand contact to (6S)-5,6,7,8-tetrahydrofolate.

It belongs to the SHMT family. Homodimer. Pyridoxal 5'-phosphate is required as a cofactor.

Its subcellular location is the cytoplasm. The enzyme catalyses (6R)-5,10-methylene-5,6,7,8-tetrahydrofolate + glycine + H2O = (6S)-5,6,7,8-tetrahydrofolate + L-serine. It participates in one-carbon metabolism; tetrahydrofolate interconversion. Its pathway is amino-acid biosynthesis; glycine biosynthesis; glycine from L-serine: step 1/1. Its function is as follows. Catalyzes the reversible interconversion of serine and glycine with tetrahydrofolate (THF) serving as the one-carbon carrier. This reaction serves as the major source of one-carbon groups required for the biosynthesis of purines, thymidylate, methionine, and other important biomolecules. Also exhibits THF-independent aldolase activity toward beta-hydroxyamino acids, producing glycine and aldehydes, via a retro-aldol mechanism. In Psychrobacter cryohalolentis (strain ATCC BAA-1226 / DSM 17306 / VKM B-2378 / K5), this protein is Serine hydroxymethyltransferase.